Reading from the N-terminus, the 199-residue chain is Putative DNA-directed RNA polymerase subunit L376 (199 aa).

The protein belongs to the eukaryotic RPB7/RPC8 RNA polymerase subunit family.

Its subcellular location is the virion. The catalysed reaction is RNA(n) + a ribonucleoside 5'-triphosphate = RNA(n+1) + diphosphate. The polypeptide is Putative DNA-directed RNA polymerase subunit L376 (Acanthamoeba polyphaga (Amoeba)).